The sequence spans 486 residues: Maternal protein exuperantia (486 aa).

Disordered regions lie at residues 202–233 (NARVDNDNEADSNSSSADKHVKNGLQKERDEF) and 386–477 (STIR…ISLP). Basic and acidic residues predominate over residues 218-233 (ADKHVKNGLQKERDEF). A compositionally biased stretch (basic residues) spans 387 to 397 (TIRRRNKRNTP). Composition is skewed to polar residues over residues 420–437 (KSQSVSSVPDSTTKTPSP) and 464–476 (SALNNTAPASISL).

Functionally, ensures the proper localization of the mRNA of the bicoid gene to the anterior regions of the oocyte thus playing a fundamental role in the establishment of the polarity of the oocyte. May bind the bcd mRNA. In Drosophila virilis (Fruit fly), this protein is Maternal protein exuperantia (exu).